Consider the following 357-residue polypeptide: Acyl-coenzyme A diphosphatase NUDT19 (357 aa).

A Nudix hydrolase domain is found at 10 to 242; that stretch reads AATVMLAAGW…IWLAPPQFYE (233 aa). The interval 72–94 is disordered; it reads PRFGLGPEPPRQPPFPGLSHGDA. The span at 78–87 shows a compositional bias: pro residues; sequence PEPPRQPPFP. A Nudix box motif is present at residues 97–118; that stretch reads AALPDDVALRICAIRETFEEAG. Residues E112 and E116 each contribute to the Mg(2+) site. The residue at position 300 (K300) is an N6-succinyllysine. The Microbody targeting signal motif lies at 355–357; that stretch reads AHL.

Belongs to the Nudix hydrolase family. As to quaternary structure, monomer. The cofactor is Mg(2+). Mn(2+) serves as cofactor.

Its subcellular location is the peroxisome. It carries out the reaction an acyl-CoA + H2O = an acyl-4'-phosphopantetheine + adenosine 3',5'-bisphosphate + 2 H(+). The catalysed reaction is CoA + H2O = (R)-4'-phosphopantetheine + adenosine 3',5'-bisphosphate + 2 H(+). It catalyses the reaction hexanoyl-CoA + H2O = hexanoyl-4'-phosphopantetheine + adenosine 3',5'-bisphosphate + 2 H(+). The enzyme catalyses octanoyl-CoA + H2O = S-octanoyl-4'-phosphopantetheine + adenosine 3',5'-bisphosphate + 2 H(+). It carries out the reaction butanoyl-CoA + H2O = S-butanoyl-4'-phosphopantetheine + adenosine 3',5'-bisphosphate + 2 H(+). The catalysed reaction is propanoyl-CoA + H2O = propanoyl-4'-phosphopantetheine + adenosine 3',5'-bisphosphate + 2 H(+). It catalyses the reaction malonyl-CoA + H2O = malonyl-4'-phosphopantetheine + adenosine 3',5'-bisphosphate + 2 H(+). The enzyme catalyses succinyl-CoA + H2O = succinyl-4'-phosphopantetheine + adenosine 3',5'-bisphosphate + 2 H(+). It carries out the reaction choloyl-CoA + H2O = S-choloyl-4'-phosphopantetheine + adenosine 3',5'-bisphosphate + 2 H(+). The catalysed reaction is 4,8-dimethylnonanoyl-CoA + H2O = S-(4,8-dimethylnonanoyl)-4'-phosphopantetheine + adenosine 3',5'-bisphosphate + 2 H(+). It catalyses the reaction (9Z,12Z,15Z)-octadecatrienoyl-CoA + H2O = S-(9Z,12Z,15Z-octadecatrienoyl)-4'-phosphopantetheine + adenosine 3',5'-bisphosphate + 2 H(+). The enzyme catalyses (9Z,12Z)-octadecadienoyl-CoA + H2O = S-(9Z,12Z-octadecadienoyl)-4'-phosphopantetheine + adenosine 3',5'-bisphosphate + 2 H(+). It carries out the reaction (9Z)-hexadecenoyl-CoA + H2O = S-(9Z-hexadecenoyl)-4'-phosphopantetheine + adenosine 3',5'-bisphosphate + 2 H(+). The catalysed reaction is (9Z)-tetradecenoyl-CoA + H2O = S-(9Z-tetradecenoyl)-4'-phosphopantetheine + adenosine 3',5'-bisphosphate + 2 H(+). It catalyses the reaction (6Z)-octenoyl-CoA + H2O = S-(6Z-octenoyl)-4'-phosphopantetheine + adenosine 3',5'-bisphosphate + 2 H(+). The enzyme catalyses hexadecanoyl-CoA + H2O = S-hexadecanoyl-4'-phosphopantetheine + adenosine 3',5'-bisphosphate + 2 H(+). It carries out the reaction tetradecanoyl-CoA + H2O = tetradecanoyl-4'-phosphopantetheine + adenosine 3',5'-bisphosphate + 2 H(+). The catalysed reaction is dodecanoyl-CoA + H2O = S-dodecanoyl-4'-phosphopantetheine + adenosine 3',5'-bisphosphate + 2 H(+). It catalyses the reaction a 5'-end CoA-ribonucleoside in mRNA + H2O = a 5'-end phospho-adenosine-phospho-ribonucleoside in mRNA + (R)-4'-phosphopantetheine + 2 H(+). In terms of biological role, fatty acyl-coenzyme A (CoA) diphosphatase that hydrolyzes fatty acyl-CoA to yield acyl-4'-phosphopantetheine and adenosine 3',5'-bisphosphate. Mediates the hydrolysis of a wide range of CoA esters, including choloyl-CoA and branched-chain fatty-acyl-CoA esters and at low substrate concentrations medium and long-chain fatty-acyl-CoA esters are the primary substrates. Highest activity seen with medium-chain acyl-CoA esters and higher rates of activity seen with the unsaturated acyl-CoA esters compared with the saturated esters. Exhibits decapping activity towards dpCoA-capped RNAs in vitro. The sequence is that of Acyl-coenzyme A diphosphatase NUDT19 (Nudt19) from Mus caroli (Ryukyu mouse).